Here is a 21-residue protein sequence, read N- to C-terminus: Fibrinogen beta chain (21 aa).

Residues Glu1–Asp11 are compositionally biased toward acidic residues. Residues Glu1 to Arg21 are disordered. Tyr6 is modified (sulfotyrosine).

As to quaternary structure, heterohexamer; disulfide linked. Contains 2 sets of 3 non-identical chains (alpha, beta and gamma). The 2 heterotrimers are in head to head conformation with the N-termini in a small central domain. Conversion of fibrinogen to fibrin is triggered by thrombin, which cleaves fibrinopeptides A and B from alpha and beta chains, and thus exposes the N-terminal polymerization sites responsible for the formation of the soft clot.

The protein localises to the secreted. In terms of biological role, cleaved by the protease thrombin to yield monomers which, together with fibrinogen alpha (FGA) and fibrinogen gamma (FGG), polymerize to form an insoluble fibrin matrix. Fibrin has a major function in hemostasis as one of the primary components of blood clots. In addition, functions during the early stages of wound repair to stabilize the lesion and guide cell migration during re-epithelialization. Was originally thought to be essential for platelet aggregation, based on in vitro studies using anticoagulated blood. However subsequent studies have shown that it is not absolutely required for thrombus formation in vivo. Enhances expression of SELP in activated platelets. Maternal fibrinogen is essential for successful pregnancy. Fibrin deposition is also associated with infection, where it protects against IFNG-mediated hemorrhage. May also facilitate the antibacterial immune response via both innate and T-cell mediated pathways. This Bison bonasus (European bison) protein is Fibrinogen beta chain (FGB).